A 425-amino-acid polypeptide reads, in one-letter code: MSEDNSQGREYTLEADSELRFEIEQKNAKVLVTLLTGFAELFGTELVKKKKYEFGVGAKVAIFTYQGCVIHVSGQMDVCYISKETPMVQYINCHAALEQFRLEAEQRDKRGPSVLIVGPMDVGKSTLCRILLNYAVRVGRRPLYADLDVGQGAISVAGNVATILIERPASIEDGFAKTAPLVYHFGHKSPSGNSVLYNAVVSKMAEVTLQSLDANKRTKSSGIIVNTCGWVKGSGYEHLLHAARAYRARAIFVLDQERLYNDLLRDVPANVHVVLLPKSGGVVERSKGLRHESREQRIKEYFYGNARTPFYPFSFEVKFQDLRLYKIGAPPLPDSCMPIGMKAEDNKKKVVAVTATPALLHHILTLSFAESTDDDVIGTNIAGFCCVTEVDMERQSVMLLSPQPRPLPPNALLLWSELQFMDNHA.

ATP is bound by residues glutamate 18, lysine 59, and 121–126 (DVGKST).

Belongs to the Clp1 family. Clp1 subfamily.

Its subcellular location is the nucleus. Its function is as follows. Required for endonucleolytic cleavage during polyadenylation-dependent pre-mRNA 3'-end formation. The polypeptide is Protein CLP1 homolog (cbc) (Drosophila grimshawi (Hawaiian fruit fly)).